The primary structure comprises 863 residues: Ubiquitin carboxyl-terminal hydrolase 13 (863 aa).

Residue serine 114 is modified to Phosphoserine. At threonine 122 the chain carries Phosphothreonine. The segment at 187–295 (PVSKYANNLT…KHLAHFGIDM (109 aa)) adopts a UBP-type; degenerate zinc-finger fold. Zn(2+)-binding residues include cysteine 211, cysteine 214, cysteine 231, and histidine 244. Lysine 311 is covalently cross-linked (Glycyl lysine isopeptide (Lys-Gly) (interchain with G-Cter in SUMO2)). The region spanning 336–861 (TGLKNLGNSC…LGYMYFYRRI (526 aa)) is the USP domain. The active-site Nucleophile is cysteine 345. A Glycyl lysine isopeptide (Lys-Gly) (interchain with G-Cter in SUMO2) cross-link involves residue lysine 405. 2 UBA domains span residues 652 to 693 (DIDE…IVVH) and 727 to 767 (QPPE…IFSH). Histidine 823 serves as the catalytic Proton acceptor.

The protein belongs to the peptidase C19 family. As to quaternary structure, interacts with UFD1. Interacts (via UBA domains) with SIAH2 (when ubiquitinated). Interacts with BAG6; the interaction is direct and may mediate UBL4A deubiquitination. Interacts (via UBA 2 domain) with AMFR; the interaction is direct. Interacts with UBL4A; may be indirect via BAG6. Interacts with NEDD4.

It is found in the cytoplasm. It catalyses the reaction Thiol-dependent hydrolysis of ester, thioester, amide, peptide and isopeptide bonds formed by the C-terminal Gly of ubiquitin (a 76-residue protein attached to proteins as an intracellular targeting signal).. With respect to regulation, specifically inhibited by spautin-1 (specific and potent autophagy inhibitor-1), a derivative of MBCQ that binds to USP13 and inhibits deubiquitinase activity. Regulated by PIK3C3/VPS34-containing complexes. The weak deubiquitinase activity in vitro suggests the existence of some mechanism that activates the enzyme. In terms of biological role, deubiquitinase that mediates deubiquitination of target proteins such as BECN1, MITF, SKP2 and USP10 and is involved in various processes such as autophagy, endoplasmic reticulum-associated degradation (ERAD), cell cycle progression or DNA damage response. Component of a regulatory loop that controls autophagy and p53/TP53 levels: mediates deubiquitination of BECN1, a key regulator of autophagy, leading to stabilize the PIK3C3/VPS34-containing complexes. Alternatively, forms with NEDD4 a deubiquitination complex, which subsequently stabilizes VPS34 to promote autophagy. Also deubiquitinates USP10, an essential regulator of p53/TP53 stability. In turn, PIK3C3/VPS34-containing complexes regulate USP13 stability, suggesting the existence of a regulatory system by which PIK3C3/VPS34-containing complexes regulate p53/TP53 protein levels via USP10 and USP13. Recruited by nuclear UFD1 and mediates deubiquitination of SKP2, thereby regulating endoplasmic reticulum-associated degradation (ERAD). Also regulates ERAD through the deubiquitination of UBL4A a component of the BAG6/BAT3 complex. Mediates stabilization of SIAH2 independently of deubiquitinase activity: binds ubiquitinated SIAH2 and acts by impairing SIAH2 autoubiquitination. Regulates the cell cycle progression by stabilizing cell cycle proteins such as SKP2 and AURKB. In addition, plays an important role in maintaining genomic stability and in DNA replication checkpoint activation via regulation of RAP80 and TOPBP1. Deubiquitinates the multifunctional protein HMGB1 and subsequently drives its nucleocytoplasmic localization and its secretion. Positively regulates type I and type II interferon signalings by deubiquitinating STAT1 but negatively regulates antiviral response by deubiquitinating STING1. The sequence is that of Ubiquitin carboxyl-terminal hydrolase 13 (USP13) from Bos taurus (Bovine).